A 244-amino-acid polypeptide reads, in one-letter code: Small ribosomal subunit protein uS2 (244 aa).

It belongs to the universal ribosomal protein uS2 family.

The protein is Small ribosomal subunit protein uS2 of Exiguobacterium sibiricum (strain DSM 17290 / CCUG 55495 / CIP 109462 / JCM 13490 / 255-15).